Consider the following 30-residue polypeptide: Ornithine carbamoyltransferase (30 aa).

This sequence belongs to the aspartate/ornithine carbamoyltransferase superfamily. OTCase family.

Its subcellular location is the cytoplasm. The catalysed reaction is carbamoyl phosphate + L-ornithine = L-citrulline + phosphate + H(+). Its pathway is amino-acid biosynthesis; L-arginine biosynthesis; L-arginine from L-ornithine and carbamoyl phosphate: step 1/3. In terms of biological role, has vitronectin and fibronectin-binding activity. The sequence is that of Ornithine carbamoyltransferase (argF) from Staphylococcus epidermidis.